The sequence spans 268 residues: Basic endochitinase CHB4 (268 aa).

The N-terminal stretch at 1 to 24 is a signal peptide; the sequence is MALTKLSLVLFLCFLGLYSETVKS. Residues 25–59 enclose the Chitin-binding type-1 domain; the sequence is QNCGCAPNLCCSQFGYCGSTDAYCGTGCRSGPCRS. 7 disulfides stabilise this stretch: Cys-27-Cys-35, Cys-29-Cys-41, Cys-34-Cys-48, Cys-52-Cys-57, Cys-92-Cys-137, Cys-150-Cys-159, and Cys-236-Cys-268. Residues 71 to 268 form a catalytic region; the sequence is SVGSIVTQAF…GVDPGPNLSC (198 aa). The Proton donor role is filled by Glu-132. Asn-265 carries an N-linked (GlcNAc...) asparagine glycan.

It belongs to the glycosyl hydrolase 19 family. Chitinase class I subfamily.

It is found in the secreted. The protein localises to the extracellular space. It carries out the reaction Random endo-hydrolysis of N-acetyl-beta-D-glucosaminide (1-&gt;4)-beta-linkages in chitin and chitodextrins.. In terms of biological role, defense against chitin-containing fungal pathogens. This Brassica napus (Rape) protein is Basic endochitinase CHB4.